The chain runs to 150 residues: D-aminoacyl-tRNA deacylase (150 aa).

The Gly-cisPro motif, important for rejection of L-amino acids motif lies at 137–138 (GP).

It belongs to the DTD family. In terms of assembly, homodimer.

It is found in the cytoplasm. It carries out the reaction glycyl-tRNA(Ala) + H2O = tRNA(Ala) + glycine + H(+). It catalyses the reaction a D-aminoacyl-tRNA + H2O = a tRNA + a D-alpha-amino acid + H(+). Functionally, an aminoacyl-tRNA editing enzyme that deacylates mischarged D-aminoacyl-tRNAs. Also deacylates mischarged glycyl-tRNA(Ala), protecting cells against glycine mischarging by AlaRS. Acts via tRNA-based rather than protein-based catalysis; rejects L-amino acids rather than detecting D-amino acids in the active site. By recycling D-aminoacyl-tRNA to D-amino acids and free tRNA molecules, this enzyme counteracts the toxicity associated with the formation of D-aminoacyl-tRNA entities in vivo and helps enforce protein L-homochirality. This chain is D-aminoacyl-tRNA deacylase, found in Alkalilimnicola ehrlichii (strain ATCC BAA-1101 / DSM 17681 / MLHE-1).